The primary structure comprises 345 residues: NADH-ubiquinone oxidoreductase chain 2 (345 aa).

The next 10 membrane-spanning stretches (helical) occupy residues 1-21 (MNPI…ILTM), 25-45 (HWVS…PIIS), 59-79 (YFLI…TNAY), 96-116 (IMLS…FWLP), 123-143 (PMIT…ALLI), 148-168 (LIPP…GGLG), 191-211 (ITIT…YILL), 240-260 (TASL…LSGF), 274-294 (HLTP…MFYL), and 324-344 (SLLS…PLMI).

Belongs to the complex I subunit 2 family.

The protein localises to the mitochondrion inner membrane. It catalyses the reaction a ubiquinone + NADH + 5 H(+)(in) = a ubiquinol + NAD(+) + 4 H(+)(out). In terms of biological role, core subunit of the mitochondrial membrane respiratory chain NADH dehydrogenase (Complex I) that is believed to belong to the minimal assembly required for catalysis. Complex I functions in the transfer of electrons from NADH to the respiratory chain. The immediate electron acceptor for the enzyme is believed to be ubiquinone. In Varanus timorensis (Timor monitor), this protein is NADH-ubiquinone oxidoreductase chain 2 (MT-ND2).